A 184-amino-acid chain; its full sequence is ATP synthase subunit delta (184 aa).

The protein belongs to the ATPase delta chain family. In terms of assembly, F-type ATPases have 2 components, F(1) - the catalytic core - and F(0) - the membrane proton channel. F(1) has five subunits: alpha(3), beta(3), gamma(1), delta(1), epsilon(1). CF(0) has four main subunits: a(1), b(1), b'(1) and c(10-14). The alpha and beta chains form an alternating ring which encloses part of the gamma chain. F(1) is attached to F(0) by a central stalk formed by the gamma and epsilon chains, while a peripheral stalk is formed by the delta, b and b' chains.

It localises to the cellular thylakoid membrane. In terms of biological role, f(1)F(0) ATP synthase produces ATP from ADP in the presence of a proton or sodium gradient. F-type ATPases consist of two structural domains, F(1) containing the extramembraneous catalytic core and F(0) containing the membrane proton channel, linked together by a central stalk and a peripheral stalk. During catalysis, ATP synthesis in the catalytic domain of F(1) is coupled via a rotary mechanism of the central stalk subunits to proton translocation. Functionally, this protein is part of the stalk that links CF(0) to CF(1). It either transmits conformational changes from CF(0) to CF(1) or is implicated in proton conduction. The protein is ATP synthase subunit delta of Nostoc punctiforme (strain ATCC 29133 / PCC 73102).